A 78-amino-acid polypeptide reads, in one-letter code: Acyl carrier protein (78 aa).

Residues 1-76 (MALFEDIQAV…DVVKYIEDNK (76 aa)) enclose the Carrier domain. An O-(pantetheine 4'-phosphoryl)serine modification is found at serine 36.

Belongs to the acyl carrier protein (ACP) family. In terms of processing, 4'-phosphopantetheine is transferred from CoA to a specific serine of apo-ACP by AcpS. This modification is essential for activity because fatty acids are bound in thioester linkage to the sulfhydryl of the prosthetic group.

It is found in the cytoplasm. Its pathway is lipid metabolism; fatty acid biosynthesis. In terms of biological role, carrier of the growing fatty acid chain in fatty acid biosynthesis. The chain is Acyl carrier protein from Helicobacter acinonychis (strain Sheeba).